A 283-amino-acid polypeptide reads, in one-letter code: Acetylglutamate kinase (283 aa).

Substrate is bound by residues 64 to 65, R86, and N178; that span reads GG.

Belongs to the acetylglutamate kinase family. ArgB subfamily.

It localises to the cytoplasm. It catalyses the reaction N-acetyl-L-glutamate + ATP = N-acetyl-L-glutamyl 5-phosphate + ADP. It participates in amino-acid biosynthesis; L-arginine biosynthesis; N(2)-acetyl-L-ornithine from L-glutamate: step 2/4. Catalyzes the ATP-dependent phosphorylation of N-acetyl-L-glutamate. The protein is Acetylglutamate kinase of Lactococcus lactis subsp. cremoris (strain SK11).